The primary structure comprises 233 residues: Orotidine 5'-phosphate decarboxylase (233 aa).

Substrate is bound by residues aspartate 13, lysine 35, 62–71, threonine 122, arginine 182, glutamine 191, glycine 211, and arginine 212; that span reads DLKFHDIPNT. Lysine 64 (proton donor) is an active-site residue.

Belongs to the OMP decarboxylase family. Type 1 subfamily. As to quaternary structure, homodimer.

The enzyme catalyses orotidine 5'-phosphate + H(+) = UMP + CO2. The protein operates within pyrimidine metabolism; UMP biosynthesis via de novo pathway; UMP from orotate: step 2/2. Catalyzes the decarboxylation of orotidine 5'-monophosphate (OMP) to uridine 5'-monophosphate (UMP). This chain is Orotidine 5'-phosphate decarboxylase, found in Pseudomonas putida (strain W619).